The sequence spans 195 residues: Interferon tau-8 (195 aa).

The signal sequence occupies residues 1–23; the sequence is MAFVLSLLMALVLVSYGPGGSLG. Intrachain disulfides connect C24/C122 and C52/C162.

This sequence belongs to the alpha/beta interferon family. IFN-alphaII subfamily. In terms of tissue distribution, constitutively and exclusively expressed in the mononuclear cells of the extraembryonic trophectoderm.

It is found in the secreted. Its function is as follows. Paracrine hormone primarily responsible for maternal recognition of pregnancy. Interacts with endometrial receptors, probably type I interferon receptors, and blocks estrogen receptor expression, preventing the estrogen-induced increase in oxytocin receptor expression in the endometrium. This results in the suppression of the pulsatile endometrial release of the luteolytic hormone prostaglandin F2-alpha, hindering the regression of the corpus luteum (luteolysis) and therefore a return to ovarian cyclicity. This, and a possible direct effect of IFN-tau on prostaglandin synthesis, leads in turn to continued ovarian progesterone secretion, which stimulates the secretion by the endometrium of the nutrients required for the growth of the conceptus. In summary, displays particularly high antiviral and antiproliferative potency concurrently with particular weak cytotoxicity, high antiluteolytic activity and immunomodulatory properties. In contrast with other IFNs, IFN-tau is not virally inducible. In Ovis aries (Sheep), this protein is Interferon tau-8 (IFNT8).